The primary structure comprises 284 residues: D-tagatose-1,6-bisphosphate aldolase subunit GatY (284 aa).

Residue Asp-82 is the Proton donor of the active site. 2 residues coordinate Zn(2+): His-83 and His-180. Gly-181 is a binding site for dihydroxyacetone phosphate. Residue His-208 participates in Zn(2+) binding. Dihydroxyacetone phosphate is bound by residues 209–211 (GAS) and 230–233 (NVAT).

This sequence belongs to the class II fructose-bisphosphate aldolase family. TagBP aldolase GatY subfamily. Forms a complex with GatZ. Zn(2+) serves as cofactor.

The enzyme catalyses D-tagatofuranose 1,6-bisphosphate = D-glyceraldehyde 3-phosphate + dihydroxyacetone phosphate. It participates in carbohydrate metabolism; D-tagatose 6-phosphate degradation; D-glyceraldehyde 3-phosphate and glycerone phosphate from D-tagatose 6-phosphate: step 2/2. Its function is as follows. Catalytic subunit of the tagatose-1,6-bisphosphate aldolase GatYZ, which catalyzes the reversible aldol condensation of dihydroxyacetone phosphate (DHAP or glycerone-phosphate) with glyceraldehyde 3-phosphate (G3P) to produce tagatose 1,6-bisphosphate (TBP). Requires GatZ subunit for full activity and stability. Is involved in the catabolism of galactitol. The chain is D-tagatose-1,6-bisphosphate aldolase subunit GatY from Shigella flexneri serotype 5b (strain 8401).